Here is a 131-residue protein sequence, read N- to C-terminus: Profilin-1 (131 aa).

Cys13 and Cys115 are joined by a disulfide. The short motif at 81 to 97 is the Involved in PIP2 interaction element; that stretch reads RVIRGKKGAGGITIKKT. Thr111 is subject to Phosphothreonine.

This sequence belongs to the profilin family. Occurs in many kinds of cells as a complex with monomeric actin in a 1:1 ratio.

The protein localises to the cytoplasm. The protein resides in the cytoskeleton. Binds to actin and affects the structure of the cytoskeleton. At high concentrations, profilin prevents the polymerization of actin, whereas it enhances it at low concentrations. By binding to PIP2, it inhibits the formation of IP3 and DG. In Phleum pratense (Common timothy), this protein is Profilin-1 (PRO1).